A 257-amino-acid polypeptide reads, in one-letter code: Imidazole glycerol phosphate synthase subunit HisF (257 aa).

Active-site residues include D12 and D131.

The protein belongs to the HisA/HisF family. Heterodimer of HisH and HisF.

It localises to the cytoplasm. The catalysed reaction is 5-[(5-phospho-1-deoxy-D-ribulos-1-ylimino)methylamino]-1-(5-phospho-beta-D-ribosyl)imidazole-4-carboxamide + L-glutamine = D-erythro-1-(imidazol-4-yl)glycerol 3-phosphate + 5-amino-1-(5-phospho-beta-D-ribosyl)imidazole-4-carboxamide + L-glutamate + H(+). Its pathway is amino-acid biosynthesis; L-histidine biosynthesis; L-histidine from 5-phospho-alpha-D-ribose 1-diphosphate: step 5/9. IGPS catalyzes the conversion of PRFAR and glutamine to IGP, AICAR and glutamate. The HisF subunit catalyzes the cyclization activity that produces IGP and AICAR from PRFAR using the ammonia provided by the HisH subunit. This chain is Imidazole glycerol phosphate synthase subunit HisF, found in Burkholderia mallei (strain NCTC 10247).